A 323-amino-acid chain; its full sequence is Aldo-keto reductase family 1 member C2 (323 aa).

Residues 20-24 and D50 each bind NADP(+); that span reads GFGTY. Y24 is a substrate binding site. Y55 (proton donor) is an active-site residue. Residue H117 coordinates substrate. NADP(+) is bound by residues 166–167, Q190, and 216–222; these read SN and YSALGSH. 2 residues coordinate substrate: H222 and W227. 270–280 contacts NADP(+); it reads KSYNEQRIRQN.

The protein belongs to the aldo/keto reductase family. Expressed in fetal testes. Expressed in fetal and adult adrenal glands.

The protein localises to the cytoplasm. Its subcellular location is the cytosol. The enzyme catalyses a 3alpha-hydroxysteroid + NADP(+) = a 3-oxosteroid + NADPH + H(+). The catalysed reaction is a 3alpha-hydroxysteroid + NAD(+) = a 3-oxosteroid + NADH + H(+). It carries out the reaction 5alpha-androstane-3alpha,17beta-diol + NADP(+) = 17beta-hydroxy-5alpha-androstan-3-one + NADPH + H(+). It catalyses the reaction 5alpha-androstane-3alpha,17beta-diol + NAD(+) = 17beta-hydroxy-5alpha-androstan-3-one + NADH + H(+). The enzyme catalyses 5alpha-androstane-3alpha,17beta-diol + NAD(+) = androsterone + NADH + H(+). The catalysed reaction is 17beta-estradiol + NADP(+) = estrone + NADPH + H(+). It carries out the reaction 17beta-estradiol + NAD(+) = estrone + NADH + H(+). It catalyses the reaction (20S)-hydroxypregn-4-en-3-one + NADP(+) = progesterone + NADPH + H(+). The enzyme catalyses (20S)-hydroxypregn-4-en-3-one + NAD(+) = progesterone + NADH + H(+). The catalysed reaction is androsterone + NADP(+) = 5alpha-androstan-3,17-dione + NADPH + H(+). It carries out the reaction (3beta,5alpha,17beta)-3-hydroxy-androstan-17-yl sulfate + NADP(+) = 5alpha-dihydrotestosterone sulfate + NADPH + H(+). It catalyses the reaction (1R,2R)-1,2-dihydrobenzene-1,2-diol + NADP(+) = catechol + NADPH + H(+). The enzyme catalyses (S)-indan-1-ol + NAD(+) = indan-1-one + NADH + H(+). The catalysed reaction is (S)-indan-1-ol + NADP(+) = indan-1-one + NADPH + H(+). The protein operates within steroid metabolism. Its activity is regulated as follows. Inhibited by hexestrol with an IC(50) of 2.8 uM, 1,10-phenanthroline with an IC(50) of 2100 uM, 1,7-phenanthroline with an IC(50) of 1500 uM, flufenamic acid with an IC(50) of 0.9 uM, indomethacin with an IC(50) of 75 uM, ibuprofen with an IC(50) of 6.9 uM, lithocholic acid with an IC(50) of 0.07 uM, ursodeoxycholic acid with an IC(50) of 0.08 uM and chenodeoxycholic acid with an IC(50) of 0.13 uM. The oxidation reaction is inhibited by low micromolar concentrations of NADPH. Its function is as follows. Cytosolic aldo-keto reductase that catalyzes the NADH and NADPH-dependent reduction of ketosteroids to hydroxysteroids. Most probably acts as a reductase in vivo since the oxidase activity measured in vitro is inhibited by physiological concentrations of NADPH. Displays a broad positional specificity acting on positions 3, 17 and 20 of steroids and regulates the metabolism of hormones like estrogens and androgens. Works in concert with the 5-alpha/5-beta-steroid reductases to convert steroid hormones into the 3-alpha/5-alpha and 3-alpha/5-beta-tetrahydrosteroids. Catalyzes the inactivation of the most potent androgen 5-alpha-dihydrotestosterone (5-alpha-DHT) to 5-alpha-androstane-3-alpha,17-beta-diol (3-alpha-diol). Also specifically able to produce 17beta-hydroxy-5alpha-androstan-3-one/5alphaDHT. May also reduce conjugated steroids such as 5alpha-dihydrotestosterone sulfate. Displays affinity for bile acids. This chain is Aldo-keto reductase family 1 member C2 (AKR1C2), found in Homo sapiens (Human).